The chain runs to 765 residues: Amine oxidase [copper-containing] 3 (765 aa).

At 1 to 6 (MTQKTT) the chain is on the cytoplasmic side. A helical; Signal-anchor for type II membrane protein membrane pass occupies residues 7-27 (LVLLALAVITIFALVCVLLAG). The Extracellular portion of the chain corresponds to 28-765 (RSGDGGGLSQ…SHGGFAYRDN (738 aa)). N-linked (GlcNAc...) asparagine glycosylation occurs at Asn-137. An intrachain disulfide couples Cys-198 to Cys-199. 2 N-linked (GlcNAc...) asparagine glycosylation sites follow: Asn-232 and Asn-294. Residue Asp-386 is the Proton acceptor of the active site. A disulfide bridge links Cys-404 with Cys-430. Catalysis depends on Tyr-471, which acts as the Schiff-base intermediate with substrate; via topaquinone. Position 471 is a 2',4',5'-topaquinone (Tyr-471). Cu(2+)-binding residues include His-520 and His-522. The Ca(2+) site is built by Asp-529, Leu-530, Asp-531, and Glu-572. Asn-592 carries an N-linked (GlcNAc...) asparagine glycan. Glu-641 contacts Ca(2+). Asn-659 is a glycosylation site (N-linked (GlcNAc...) asparagine). Phe-663 contacts Ca(2+). A glycan (N-linked (GlcNAc...) asparagine) is linked at Asn-666. Ca(2+)-binding residues include Glu-667, Asp-673, and Leu-674. His-684 is a Cu(2+) binding site. Cys-734 and Cys-741 are disulfide-bonded.

Belongs to the copper/topaquinone oxidase family. As to quaternary structure, homodimer; disulfide-linked. Probably forms heterodimers with AOC2. The cofactor is Cu(2+). It depends on Ca(2+) as a cofactor. L-topaquinone is required as a cofactor. Topaquinone (TPQ) is generated by copper-dependent autoxidation of a specific tyrosyl residue. Post-translationally, N- and O-glycosylated.

The protein resides in the cell membrane. The catalysed reaction is methylamine + O2 + H2O = formaldehyde + H2O2 + NH4(+). It catalyses the reaction benzylamine + O2 + H2O = benzaldehyde + H2O2 + NH4(+). It carries out the reaction 2-phenylethylamine + O2 + H2O = 2-phenylacetaldehyde + H2O2 + NH4(+). Functionally, catalyzes the oxidative deamination of primary amines to the corresponding aldehydes with the concomitant production of hydrogen peroxide and ammonia. Has a preference for the primary monoamines methylamine and benzylamine. Could also act on 2-phenylethylamine but much less efficiently. At endothelial cells surface can also function as a cell adhesion protein that participates in lymphocyte extravasation and recirculation by mediating the binding of lymphocytes to peripheral lymph node vascular endothelial cells in an L-selectin-independent fashion. In Mus musculus (Mouse), this protein is Amine oxidase [copper-containing] 3.